The chain runs to 370 residues: Neutral protease 2 homolog AFUA_4G13750 (370 aa).

The signal sequence occupies residues Met-1–Ala-19. Positions Leu-20–Arg-172 are excised as a propeptide. 2 disulfides stabilise this stretch: Cys-178–Cys-250 and Cys-257–Cys-275. Residue His-300 participates in Zn(2+) binding. The active site involves Glu-301. 2 residues coordinate Zn(2+): His-304 and Asp-315.

This sequence belongs to the peptidase M35 family. Requires Zn(2+) as cofactor.

It is found in the secreted. It catalyses the reaction Preferential cleavage of bonds with hydrophobic residues in P1'. Also 3-Asn-|-Gln-4 and 8-Gly-|-Ser-9 bonds in insulin B chain.. Its function is as follows. Secreted metalloproteinase that allows assimilation of proteinaceous substrates. Shows high activities on basic nuclear substrates such as histone and protamine. May be involved in virulence. In Aspergillus fumigatus (strain ATCC MYA-4609 / CBS 101355 / FGSC A1100 / Af293) (Neosartorya fumigata), this protein is Neutral protease 2 homolog AFUA_4G13750.